A 282-amino-acid chain; its full sequence is MNYRELFTGGLSAATVCACSLLVSGAVVASPMSHEVASEGGVMGGSFYVGAAYSPAFPSVTSFDMRESSKETSYVRGYDKSIATIDVSVPANFSKSGYTFAFSKNLITSFDGAVGYSLGGARVELEASYRRFATLADGQYAKSGAESLAAITRDANITETNYFVVKIDEITNTSVMLNGCYDVLHTDLPVSPYVCAGIGASFVDISKQVTTKLAYRGKVGISYQFTPEISLVAGGFYHGLFDESYKDIPAHNSVKFSGEAKASVKAHIADYGFNLGARFLFS.

The signal sequence occupies residues 1–29; it reads MNYRELFTGGLSAATVCACSLLVSGAVVA.

It belongs to the surface antigen msp4 family.

The sequence is that of Major surface antigen 4 (msp4) from Anaplasma marginale.